Here is a 36-residue protein sequence, read N- to C-terminus: U14-ctenitoxin-Co1b (36 aa).

In terms of tissue distribution, expressed by the venom gland.

It localises to the secreted. In terms of biological role, not toxic to mice by intracerebroventricular injection. The protein is U14-ctenitoxin-Co1b of Ctenus ornatus (Brazilian spider).